A 182-amino-acid chain; its full sequence is Ribosome-recycling factor (182 aa).

This sequence belongs to the RRF family.

Its subcellular location is the cytoplasm. Its function is as follows. Responsible for the release of ribosomes from messenger RNA at the termination of protein biosynthesis. May increase the efficiency of translation by recycling ribosomes from one round of translation to another. The protein is Ribosome-recycling factor of Prochlorococcus marinus (strain AS9601).